Reading from the N-terminus, the 243-residue chain is NAD-dependent protein deacetylase (243 aa).

Positions 1 to 243 (MKHDLETLKH…VSVVKSLMTE (243 aa)) constitute a Deacetylase sirtuin-type domain. NAD(+) contacts are provided by alanine 24, phenylalanine 35, arginine 36, glutamine 105, isoleucine 107, aspartate 108, and histidine 123. A nicotinamide-binding site is contributed by phenylalanine 35. The nicotinamide site is built by isoleucine 107 and aspartate 108. The active-site Proton acceptor is histidine 123. Cysteine 131, cysteine 134, cysteine 151, and cysteine 154 together coordinate Zn(2+). Serine 192, serine 193, asparagine 215, and aspartate 232 together coordinate NAD(+).

The protein belongs to the sirtuin family. Class U subfamily. It depends on Zn(2+) as a cofactor.

It localises to the cytoplasm. The catalysed reaction is N(6)-acetyl-L-lysyl-[protein] + NAD(+) + H2O = 2''-O-acetyl-ADP-D-ribose + nicotinamide + L-lysyl-[protein]. Functionally, NAD-dependent protein deacetylase which modulates the activities of several enzymes which are inactive in their acetylated form. The chain is NAD-dependent protein deacetylase from Staphylococcus aureus (strain MRSA252).